A 736-amino-acid polypeptide reads, in one-letter code: Probable beta-glucosidase L (736 aa).

The N-terminal stretch at Met-1–Ala-21 is a signal peptide. N-linked (GlcNAc...) asparagine glycosylation is present at Asn-224. The active site involves Asp-252. N-linked (GlcNAc...) asparagine glycosylation is found at Asn-295, Asn-363, Asn-429, and Asn-607.

The protein belongs to the glycosyl hydrolase 3 family.

It localises to the secreted. The catalysed reaction is Hydrolysis of terminal, non-reducing beta-D-glucosyl residues with release of beta-D-glucose.. It participates in glycan metabolism; cellulose degradation. In terms of biological role, beta-glucosidases are one of a number of cellulolytic enzymes involved in the degradation of cellulosic biomass. Catalyzes the last step releasing glucose from the inhibitory cellobiose. The polypeptide is Probable beta-glucosidase L (bglL) (Aspergillus terreus (strain NIH 2624 / FGSC A1156)).